Consider the following 305-residue polypeptide: Oxygen-dependent coproporphyrinogen-III oxidase (305 aa).

Position 93 (serine 93) interacts with substrate. Histidine 97 and histidine 107 together coordinate a divalent metal cation. Catalysis depends on histidine 107, which acts as the Proton donor. Residue asparagine 109 to arginine 111 participates in substrate binding. Residues histidine 146 and histidine 176 each contribute to the a divalent metal cation site. The tract at residues tyrosine 241 to glycine 276 is important for dimerization. Glycine 259–arginine 261 is a substrate binding site.

Belongs to the aerobic coproporphyrinogen-III oxidase family. Homodimer. Requires a divalent metal cation as cofactor.

The protein localises to the cytoplasm. The enzyme catalyses coproporphyrinogen III + O2 + 2 H(+) = protoporphyrinogen IX + 2 CO2 + 2 H2O. It participates in porphyrin-containing compound metabolism; protoporphyrin-IX biosynthesis; protoporphyrinogen-IX from coproporphyrinogen-III (O2 route): step 1/1. Its function is as follows. Involved in the heme biosynthesis. Catalyzes the aerobic oxidative decarboxylation of propionate groups of rings A and B of coproporphyrinogen-III to yield the vinyl groups in protoporphyrinogen-IX. The sequence is that of Oxygen-dependent coproporphyrinogen-III oxidase from Pseudomonas aeruginosa (strain LESB58).